We begin with the raw amino-acid sequence, 199 residues long: ATP-dependent Clp protease proteolytic subunit (199 aa).

S99 functions as the Nucleophile in the catalytic mechanism. The active site involves H124.

It belongs to the peptidase S14 family. In terms of assembly, fourteen ClpP subunits assemble into 2 heptameric rings which stack back to back to give a disk-like structure with a central cavity, resembling the structure of eukaryotic proteasomes.

The protein localises to the cytoplasm. It carries out the reaction Hydrolysis of proteins to small peptides in the presence of ATP and magnesium. alpha-casein is the usual test substrate. In the absence of ATP, only oligopeptides shorter than five residues are hydrolyzed (such as succinyl-Leu-Tyr-|-NHMec, and Leu-Tyr-Leu-|-Tyr-Trp, in which cleavage of the -Tyr-|-Leu- and -Tyr-|-Trp bonds also occurs).. Its function is as follows. Cleaves peptides in various proteins in a process that requires ATP hydrolysis. Has a chymotrypsin-like activity. Plays a major role in the degradation of misfolded proteins. The polypeptide is ATP-dependent Clp protease proteolytic subunit (Lactococcus lactis subsp. cremoris (strain SK11)).